The chain runs to 748 residues: Catalase-peroxidase 2 (748 aa).

The span at 1–24 shows a compositional bias: polar residues; that stretch reads MSSDTSDSRPPNPDTKTASTSESE. The segment at 1 to 43 is disordered; that stretch reads MSSDTSDSRPPNPDTKTASTSESENPAIPSPKPKSGAPLRNQD. Residues 113–238 constitute a cross-link (tryptophyl-tyrosyl-methioninium (Trp-Tyr) (with M-264)); the sequence is WHSAGTYRIH…YGATTMGLIY (126 aa). The active-site Proton acceptor is the H114. The segment at residues 238 to 264 is a cross-link (tryptophyl-tyrosyl-methioninium (Tyr-Met) (with W-113)); that stretch reads YVNPEGPEGQPDPLAAAHDIRETFGRM. H279 serves as a coordination point for heme b.

This sequence belongs to the peroxidase family. Peroxidase/catalase subfamily. In terms of assembly, homotetramer. Heme b is required as a cofactor. In terms of processing, formation of the three residue Trp-Tyr-Met cross-link is important for the catalase, but not the peroxidase activity of the enzyme.

It carries out the reaction H2O2 + AH2 = A + 2 H2O. The enzyme catalyses 2 H2O2 = O2 + 2 H2O. Bifunctional enzyme with both catalase and broad-spectrum peroxidase activity. May play a role in the intracellular survival of mycobacteria. The chain is Catalase-peroxidase 2 from Mycolicibacterium smegmatis (strain ATCC 700084 / mc(2)155) (Mycobacterium smegmatis).